The sequence spans 179 residues: Viral interleukin-10 homolog (179 aa).

Positions 1-18 (MFRASLLCCLVLLAGVWA) are cleaved as a signal peptide. 2 cysteine pairs are disulfide-bonded: C30-C127 and C80-C133. N-linked (GlcNAc...) asparagine; by host glycans are attached at residues N100 and N135.

It belongs to the IL-10 family.

It localises to the secreted. In terms of biological role, down-regulates the expression of the TAP1 gene (transporter associated with antigen processing), thereby affecting the transport of peptides into the endoplasmic reticulum and subsequent peptide loading by MHC class I molecules. In consequence, infected cells are masked for immune recognition by cytotoxic T-lymphocytes. In Equus caballus (Horse), this protein is Viral interleukin-10 homolog.